Here is a 399-residue protein sequence, read N- to C-terminus: CCA-adding enzyme (399 aa).

ATP is bound by residues glycine 32 and arginine 35. CTP is bound by residues glycine 32 and arginine 35. Residues aspartate 45 and aspartate 47 each coordinate Mg(2+). ATP-binding residues include arginine 116, aspartate 159, arginine 162, arginine 165, and arginine 168. Residues arginine 116, aspartate 159, arginine 162, arginine 165, and arginine 168 each contribute to the CTP site.

It belongs to the tRNA nucleotidyltransferase/poly(A) polymerase family. Bacterial CCA-adding enzyme type 3 subfamily. In terms of assembly, homodimer. It depends on Mg(2+) as a cofactor.

The enzyme catalyses a tRNA precursor + 2 CTP + ATP = a tRNA with a 3' CCA end + 3 diphosphate. The catalysed reaction is a tRNA with a 3' CCA end + 2 CTP + ATP = a tRNA with a 3' CCACCA end + 3 diphosphate. Its function is as follows. Catalyzes the addition and repair of the essential 3'-terminal CCA sequence in tRNAs without using a nucleic acid template. Adds these three nucleotides in the order of C, C, and A to the tRNA nucleotide-73, using CTP and ATP as substrates and producing inorganic pyrophosphate. tRNA 3'-terminal CCA addition is required both for tRNA processing and repair. Also involved in tRNA surveillance by mediating tandem CCA addition to generate a CCACCA at the 3' terminus of unstable tRNAs. While stable tRNAs receive only 3'-terminal CCA, unstable tRNAs are marked with CCACCA and rapidly degraded. The chain is CCA-adding enzyme from Streptococcus gordonii (strain Challis / ATCC 35105 / BCRC 15272 / CH1 / DL1 / V288).